We begin with the raw amino-acid sequence, 571 residues long: Urease subunit alpha (571 aa).

A Urease domain is found at 134 to 571 (GAIDTHIHFI…LPMAQRYFLF (438 aa)). Residues His-139, His-141, and Lys-222 each contribute to the Ni(2+) site. N6-carboxylysine is present on Lys-222. A substrate-binding site is contributed by His-224. Positions 251 and 277 each coordinate Ni(2+). His-325 functions as the Proton donor in the catalytic mechanism. Asp-365 contributes to the Ni(2+) binding site.

The protein belongs to the metallo-dependent hydrolases superfamily. Urease alpha subunit family. In terms of assembly, heterotrimer of UreA (gamma), UreB (beta) and UreC (alpha) subunits. Three heterotrimers associate to form the active enzyme. It depends on Ni cation as a cofactor. Carboxylation allows a single lysine to coordinate two nickel ions.

It is found in the cytoplasm. The catalysed reaction is urea + 2 H2O + H(+) = hydrogencarbonate + 2 NH4(+). It participates in nitrogen metabolism; urea degradation; CO(2) and NH(3) from urea (urease route): step 1/1. The polypeptide is Urease subunit alpha (Bordetella parapertussis (strain 12822 / ATCC BAA-587 / NCTC 13253)).